The following is a 491-amino-acid chain: UDP-GalNAc:beta-1,3-N-acetylgalactosaminyltransferase 2 (491 aa).

Residues 1–2 (MR) are Cytoplasmic-facing. Residues 3–23 (SAAAALSVCVLAVLLHWICWT) form a helical; Signal-anchor for type II membrane protein membrane-spanning segment. At 24–491 (DRSAELLGFR…NKCGDPCGCS (468 aa)) the chain is on the lumenal side. N-linked (GlcNAc...) asparagine glycans are attached at residues Asn-167 and Asn-230.

This sequence belongs to the glycosyltransferase 31 family.

It is found in the golgi apparatus membrane. Its subcellular location is the endoplasmic reticulum. The catalysed reaction is 3-O-(N-acetyl-beta-D-glucosaminyl-(1-&gt;4)-alpha-D-mannosyl)-L-threonyl-[protein] + UDP-N-acetyl-alpha-D-galactosamine = 3-O-[beta-D-GalNAc-(1-&gt;3)-beta-D-GlcNAc-(1-&gt;4)-alpha-D-Man]-L-Thr-[protein] + UDP + H(+). It functions in the pathway protein modification; protein glycosylation. Beta-1,3-N-acetylgalactosaminyltransferase that synthesizes a unique carbohydrate structure, GalNAc-beta-1-3GlcNAc, on N- and O-glycans. Has no galactose nor galactosaminyl transferase activity toward any acceptor substrate. Involved in alpha-dystroglycan (dag1) glycosylation. The chain is UDP-GalNAc:beta-1,3-N-acetylgalactosaminyltransferase 2 (b3galnt2) from Danio rerio (Zebrafish).